We begin with the raw amino-acid sequence, 410 residues long: Na(+)/H(+) antiporter NhaA 1/4 (410 aa).

Transmembrane regions (helical) follow at residues 16–36 (VGGSLLIGAAVIALIWANSPL), 55–75 (LNLSVETWAADGLLAVFFFIV), 95–115 (ALPIAAALGGVAVPALVFLAF), 125–145 (GGWGIPMATGIAFAVAVLAVV), 156–176 (FLLTLATVDDMSAVLVIAVAC), 178–198 (SGINFTALALAAVGLAVFGYL), 215–235 (AWLLFVPLAAVVWALMHACGV), 275–295 (IALPLFALMSAGVSLAGAGGF), 299–319 (AITWNVLAGLLVGKVVGIFGG), 340–360 (IAGIAVLGGIGFTVSLPIAEL), and 371–391 (AKGAILLASTTAALLAALLLG).

Belongs to the NhaA Na(+)/H(+) (TC 2.A.33) antiporter family.

It is found in the cell membrane. It catalyses the reaction Na(+)(in) + 2 H(+)(out) = Na(+)(out) + 2 H(+)(in). In terms of biological role, na(+)/H(+) antiporter that extrudes sodium in exchange for external protons. The protein is Na(+)/H(+) antiporter NhaA 1/4 of Streptomyces coelicolor (strain ATCC BAA-471 / A3(2) / M145).